Here is a 1344-residue protein sequence, read N- to C-terminus: Regulatory-associated protein of TOR 1 (1344 aa).

Over residues 28 to 44 the composition is skewed to basic and acidic residues; sequence CVSSHDDGDSRRKDSEA. 2 disordered regions span residues 28–56 and 771–818; these read CVSS…GTTE and ASTD…DSVS. Over residues 785-816 the composition is skewed to low complexity; sequence SSSPLGSSGLMQGSPLSDDSSLHSDSGMMHDS. 7 WD repeats span residues 1025 to 1064, 1070 to 1111, 1125 to 1164, 1168 to 1208, 1214 to 1255, 1259 to 1298, and 1307 to 1344; these read RFET…LLNG, FPDK…GKQK, GARD…LVRS, ESEC…PLVC, QKVE…DTYL, AHRG…LGII, and QKIG…SQAR.

This sequence belongs to the WD repeat RAPTOR family. In terms of assembly, interacts with TOR, ATPK1 and ML1. Interacts with KIN10. In terms of processing, phosphorylated by KIN10. As to expression, expressed in roots, leaves, flowers and seeds.

The protein localises to the cytoplasm. Functionally, probable component of the plant TOR kinase pathway that recruits substrates for TOR. Modulates plant cell growth and regulates the activity of ATPK1 kinase in response to osmotic stress. The sequence is that of Regulatory-associated protein of TOR 1 (RAPTOR1) from Arabidopsis thaliana (Mouse-ear cress).